The following is a 314-amino-acid chain: Quinolinate synthase (314 aa).

His27 and Ser44 together coordinate iminosuccinate. Position 89 (Cys89) interacts with [4Fe-4S] cluster. Residues 115 to 117 (YIN) and Ser132 each bind iminosuccinate. Cys175 is a binding site for [4Fe-4S] cluster. Residues 201–203 (HPE) and Thr218 each bind iminosuccinate. Residue Cys271 participates in [4Fe-4S] cluster binding.

This sequence belongs to the quinolinate synthase family. Type 2 subfamily. [4Fe-4S] cluster serves as cofactor.

The protein localises to the cytoplasm. It catalyses the reaction iminosuccinate + dihydroxyacetone phosphate = quinolinate + phosphate + 2 H2O + H(+). It functions in the pathway cofactor biosynthesis; NAD(+) biosynthesis; quinolinate from iminoaspartate: step 1/1. Functionally, catalyzes the condensation of iminoaspartate with dihydroxyacetone phosphate to form quinolinate. This Ehrlichia chaffeensis (strain ATCC CRL-10679 / Arkansas) protein is Quinolinate synthase.